A 544-amino-acid chain; its full sequence is Lysophosphatidylcholine acyltransferase 2 (544 aa).

At 1–57 (MSRCAQAAEVAATVPGAGVGNVGLRPPMVPRQASFFPPPVPNPFVQQTQIGSARRVQ) the chain is on the cytoplasmic side. A helical; Signal-anchor for type II membrane protein transmembrane segment spans residues 58–78 (IVLLGIILLPIRVLLVALILL). The Lumenal portion of the chain corresponds to 79 to 544 (LAWPFAAIST…EESTSDKKDD (466 aa)). Residues 146–151 (HSTFFD) carry the HXXXXD motif motif. The short motif at 220-223 (EGTC) is the EGTC motif element. EF-hand domains follow at residues 391–426 (PVSD…LCNP) and 428–463 (NTEE…SLGV). Residues D404, N406, D408, S410, E415, D441, D443, D445, Y447, and E452 each contribute to the Ca(2+) site. Positions 518-529 (VQTTPSTASNKV) are enriched in polar residues. Positions 518 to 544 (VQTTPSTASNKVSPEKHEESTSDKKDD) are disordered. Basic and acidic residues predominate over residues 530-544 (SPEKHEESTSDKKDD).

This sequence belongs to the 1-acyl-sn-glycerol-3-phosphate acyltransferase family.

The protein localises to the endoplasmic reticulum membrane. It localises to the golgi apparatus membrane. Its subcellular location is the cell membrane. It is found in the lipid droplet. The enzyme catalyses a 1-acyl-sn-glycero-3-phosphocholine + an acyl-CoA = a 1,2-diacyl-sn-glycero-3-phosphocholine + CoA. It carries out the reaction a 1-O-alkyl-sn-glycero-3-phosphocholine + acetyl-CoA = a 1-O-alkyl-2-acetyl-sn-glycero-3-phosphocholine + CoA. It catalyses the reaction a 1-acyl-sn-glycero-3-phosphate + an acyl-CoA = a 1,2-diacyl-sn-glycero-3-phosphate + CoA. The catalysed reaction is a 1-O-(1Z-alkenyl)-sn-glycero-3-phosphocholine + an acyl-CoA = a 1-O-(1Z-alkenyl)-2-acyl-sn-glycero-3-phosphocholine + CoA. The enzyme catalyses 1-hexadecanoyl-sn-glycero-3-phosphate + (9Z)-octadecenoyl-CoA = 1-hexadecanoyl-2-(9Z-octadecenoyl)-sn-glycero-3-phosphate + CoA. It carries out the reaction 1-(9Z-octadecenoyl)-sn-glycero-3-phosphate + (9Z)-octadecenoyl-CoA = 1,2-di-(9Z-octadecenoyl)-sn-glycero-3-phosphate + CoA. It catalyses the reaction 1-(9Z-octadecenoyl)-sn-glycero-3-phosphate + hexadecanoyl-CoA = 1-(9Z)-octadecenoyl-2-hexadecanoyl-sn-glycero-3-phosphate + CoA. The catalysed reaction is 1-heptadecanoyl-sn-glycero-3-phosphate + (9Z)-octadecenoyl-CoA = 1-heptadecanoyl-2-(9Z)-octadecenoyl-sn-glycero-3-phosphate + CoA. The enzyme catalyses 1-octadecanoyl-sn-glycero-3-phosphate + (9Z)-octadecenoyl-CoA = 1-octadecanoyl-2-(9Z-octadecenoyl)-sn-glycero-3-phosphate + CoA. It carries out the reaction heptadecanoyl-CoA + 1-(9Z-octadecenoyl)-sn-glycero-3-phosphate = 1-(9Z)-octadecenoyl-2-heptadecanoyl-sn-glycero-3-phosphate + CoA. It catalyses the reaction 1-(9Z-octadecenoyl)-sn-glycero-3-phosphate + (9Z,12Z)-octadecadienoyl-CoA = 1-(9Z)-octadecenoyl-2-(9Z,12Z)-octadecadienoyl-sn-glycero-3-phosphate + CoA. The catalysed reaction is 1-(9Z-octadecenoyl)-sn-glycero-3-phosphate + tetradecanoyl-CoA = 1-(9Z)-octadecenoyl-2-tetradecanoyl-sn-glycero-3-phosphate + CoA. The enzyme catalyses pentadecanoyl-CoA + 1-(9Z-octadecenoyl)-sn-glycero-3-phosphate = 1-(9Z)-octadecenoyl-2-pentadecanoyl-sn-glycero-3-phosphate + CoA. It carries out the reaction nonadecanoyl-CoA + 1-(9Z-octadecenoyl)-sn-glycero-3-phosphate = 1-(9Z)-octadecenoyl-2-nonadecanoyl-sn-glycero-3-phosphate + CoA. It catalyses the reaction 1-hexadecanoyl-sn-glycero-3-phosphocholine + (9Z)-octadecenoyl-CoA = 1-hexadecanoyl-2-(9Z-octadecenoyl)-sn-glycero-3-phosphocholine + CoA. The catalysed reaction is 1-O-hexadecyl-sn-glycero-3-phosphocholine + acetyl-CoA = 1-O-hexadecyl-2-acetyl-sn-glycero-3-phosphocholine + CoA. The enzyme catalyses 1-O-octadecyl-sn-glycero-3-phosphocholine + acetyl-CoA = 1-O-octadecyl-2-acetyl-sn-glycero-3-phosphocholine + CoA. It carries out the reaction 1-hexadecanoyl-sn-glycero-3-phosphocholine + acetyl-CoA = 1-hexadecanoyl-2-acetyl-sn-glycero-3-phosphocholine + CoA. It catalyses the reaction 1-octadecanoyl-sn-glycero-3-phosphocholine + acetyl-CoA = 1-octadecanoyl-2-acetyl-sn-glycero-3-phosphocholine + CoA. The catalysed reaction is a 1-O-(1Z-alkenyl)-sn-glycero-3-phosphocholine + acetyl-CoA = 1-O-(1Z)-alkenyl-2-acetyl-sn-glycero-3-phosphocholine + CoA. The enzyme catalyses 1-O-octadecyl-sn-glycero-3-phosphocholine + (5Z,8Z,11Z,14Z)-eicosatetraenoyl-CoA = 1-O-octadecyl-2-(5Z,8Z,11Z,14Z)-eicosatetraenoyl-sn-glycero-3-phosphocholine + CoA. It functions in the pathway lipid metabolism; phospholipid metabolism. In terms of biological role, exhibits both acyltransferase and acetyltransferase activities. Catalyzes the conversion of lysophosphatidylcholine (1-acyl-sn-glycero-3-phosphocholine or LPC) into phosphatidylcholine (1,2-diacyl-sn-glycero-3-phosphocholine or PC). Catalyzes the conversion 1-acyl-sn-glycerol-3-phosphate (lysophosphatidic acid or LPA) into 1,2-diacyl-sn-glycerol-3-phosphate (phosphatidic acid or PA) by incorporating an acyl moiety at the sn-2 position of the glycerol backbone. Involved in platelet-activating factor (PAF) biosynthesis by catalyzing the conversion of the PAF precursor, 1-O-alkyl-sn-glycero-3-phosphocholine (lyso-PAF) into 1-O-alkyl-2-acetyl-sn-glycero-3-phosphocholine (PAF). Also converts lyso-PAF to 1-O-alkyl-2-acyl-sn-glycero-3-phosphocholine (PC), a major component of cell membranes and a PAF precursor. Under resting conditions, acyltransferase activity is preferred. Upon acute inflammatory stimulus, acetyltransferase activity is enhanced and PAF synthesis increases. Involved in the regulation of lipid droplet number and size. The sequence is that of Lysophosphatidylcholine acyltransferase 2 (LPCAT2) from Homo sapiens (Human).